The primary structure comprises 228 residues: uncharacterized protein (228 aa).

To E.coli YbfG.

This is an uncharacterized protein from Haemophilus influenzae (strain ATCC 51907 / DSM 11121 / KW20 / Rd).